The following is a 383-amino-acid chain: Probable acyl-CoA dehydrogenase YdiO (383 aa).

The protein belongs to the acyl-CoA dehydrogenase family. The cofactor is FAD.

The catalysed reaction is a 2,3-saturated acyl-CoA + A = a 2,3-dehydroacyl-CoA + AH2. This Escherichia coli O157:H7 protein is Probable acyl-CoA dehydrogenase YdiO (ydiO).